The primary structure comprises 178 residues: Caveolin-1 (178 aa).

Ser-2 is modified (N-acetylserine). Ser-2 is modified (phosphoserine). A required for homooligomerization region spans residues 2 to 94 (SGGKYVDSEG…WKASFTTFTV (93 aa)). The Cytoplasmic portion of the chain corresponds to 2–104 (SGGKYVDSEG…TKYWFYRLLS (103 aa)). Lys-5 is subject to N6-acetyllysine; alternate. Lys-5 participates in a covalent cross-link: Glycyl lysine isopeptide (Lys-Gly) (interchain with G-Cter in ubiquitin); alternate. The residue at position 6 (Tyr-6) is a Phosphotyrosine. Ser-9 carries the post-translational modification Phosphoserine. At Tyr-14 the chain carries Phosphotyrosine; by ABL1. Tyr-25 is modified (phosphotyrosine). Glycyl lysine isopeptide (Lys-Gly) (interchain with G-Cter in ubiquitin) cross-links involve residues Lys-26, Lys-30, Lys-39, Lys-47, and Lys-57. The tract at residues 82–94 (DGIWKASFTTFTV) is interaction with CAVIN3. The helical intramembrane region spans 105–125 (SLVGIPVALIWGIYFAILSFL). Topologically, residues 126–178 (YIWAVVPCIKSFLIKIQCISRIYSICIHTFCDPLYEAIGKIFSNIRISMQKEI) are cytoplasmic. Residues 131–142 (VPCIKSFLIKIQ) form an interacts with SPRY1, SPRY2, SPRY3 and SPRY4 region. S-palmitoyl cysteine attachment occurs at residues Cys-133, Cys-143, and Cys-156. Residues 149-160 (SICIHTFCDPLY) form an interacts with SPRY1, SPRY2, and SPRY4 region. The interacts with SPRY1, SPRY2, SPRY3 and SPRY4 stretch occupies residues 167–178 (FSNIRISMQKEI).

It belongs to the caveolin family. As to quaternary structure, homooligomer. Interacts with GLIPR2. Interacts with NOSTRIN. Interacts with SNAP25 and STX1A. Interacts (via the N-terminus) with DPP4; the interaction is direct. Interacts with CTNNB1, CDH1 and JUP. Interacts with PACSIN2; this interaction induces membrane tubulation. Interacts with SLC7A9. Interacts with BMX and BTK. Interacts with TGFBR1. Interacts with CAVIN3 (via leucine-zipper domain) in a cholesterol-sensitive manner. Interacts with CAVIN1. Interacts with EHD2 in a cholesterol-dependent manner. Forms a ternary complex with UBXN6 and VCP; mediates CAV1 targeting to lysosomes for degradation. Interacts with ABCG1; this interaction regulates ABCG1-mediated cholesterol efflux. Interacts with NEU3; this interaction enhances NEU3 sialidase activity within caveola. Interacts (via C-terminus) with SPRY1, SPRY2 (via C-terminus), SPRY3, and SPRY4. Interacts with IGFBP5; this interaction allows trafficking of IGFBP5 from the plasma membrane to the nucleus. Phosphorylated at Tyr-14 by ABL1 in response to oxidative stress. In terms of processing, ubiquitinated. Undergo monoubiquitination and multi- and/or polyubiquitination. Monoubiquitination of N-terminal lysines promotes integration in a ternary complex with UBXN6 and VCP which promotes oligomeric CAV1 targeting to lysosomes for degradation. Ubiquitinated by ZNRF1; leading to degradation and modulation of the TLR4-mediated immune response.

Its subcellular location is the golgi apparatus membrane. The protein localises to the cell membrane. It localises to the membrane. It is found in the caveola. The protein resides in the membrane raft. May act as a scaffolding protein within caveolar membranes. Forms a stable heterooligomeric complex with CAV2 that targets to lipid rafts and drives caveolae formation. Mediates the recruitment of CAVIN proteins (CAVIN1/2/3/4) to the caveolae. Interacts directly with G-protein alpha subunits and can functionally regulate their activity. Involved in the costimulatory signal essential for T-cell receptor (TCR)-mediated T-cell activation. Its binding to DPP4 induces T-cell proliferation and NF-kappa-B activation in a T-cell receptor/CD3-dependent manner. Recruits CTNNB1 to caveolar membranes and may regulate CTNNB1-mediated signaling through the Wnt pathway. Negatively regulates TGFB1-mediated activation of SMAD2/3 by mediating the internalization of TGFBR1 from membrane rafts leading to its subsequent degradation. Binds 20(S)-hydroxycholesterol (20(S)-OHC). The sequence is that of Caveolin-1 (CAV1) from Atelerix albiventris (Middle-African hedgehog).